The primary structure comprises 290 residues: UPF0761 membrane protein CKO_03126 (290 aa).

The next 6 membrane-spanning stretches (helical) occupy residues 44 to 64 (LLSL…FPMF), 104 to 124 (VGAC…DSAL), 140 to 160 (FAVY…SLAI), 183 to 203 (VFPL…VPTT), 210 to 230 (AVVG…GFAL), and 244 to 264 (VLAV…IVLL).

This sequence belongs to the UPF0761 family.

The protein localises to the cell inner membrane. This chain is UPF0761 membrane protein CKO_03126, found in Citrobacter koseri (strain ATCC BAA-895 / CDC 4225-83 / SGSC4696).